A 420-amino-acid chain; its full sequence is Putative competence-damage inducible protein (420 aa).

This sequence belongs to the CinA family.

This chain is Putative competence-damage inducible protein, found in Halalkalibacterium halodurans (strain ATCC BAA-125 / DSM 18197 / FERM 7344 / JCM 9153 / C-125) (Bacillus halodurans).